A 777-amino-acid chain; its full sequence is Dynamin-like protein ARC5 (777 aa).

The 299-residue stretch at 45–343 (PFEAPAVLVV…LWKRYKESVP (299 aa)) folds into the Dynamin-type G domain. Residues 55–62 (GQQTDGKS) are G1 motif. Residue 55-62 (GQQTDGKS) participates in GTP binding. Residues 81-83 (KTR) form a G2 motif region. The interval 160–163 (DTPG) is G3 motif. GTP contacts are provided by residues 160-164 (DTPGL) and 231-234 (TKLD). Residues 231-234 (TKLD) form a G4 motif region. Residues 265-268 (SPFF) form a G5 motif region. Coiled-coil stretches lie at residues 300-320 (EDIASLEKKLGRLLTKQEKSR) and 728-765 (NLRQSLDQKKRSTEIELRRIKRIKEKFRVMNEKLNSHE).

The protein belongs to the TRAFAC class dynamin-like GTPase superfamily. Dynamin/Fzo/YdjA family. Forms a homodimer and heterodimers with DRP3A and DRP3B on peroxisomes. Also interacts with FIS1A (but not FIS1B) and PEX11 proteins (PEX11A, PEX11B, PEX11C, PEX11D and PEX11E) on peroxisomes. Interacts with PDV1 and PDV2. Stabilized at the plastid outer envelope membranes (OEMs) in the constriction site when in complex with GTP, but destabilized after conversion of GTP into GDP leading to turnover with a cytosolic pool.

The protein localises to the cytoplasm. It localises to the plastid. The protein resides in the chloroplast outer membrane. It is found in the peroxisome. Its subcellular location is the cytosol. It catalyses the reaction GTP + H2O = GDP + phosphate + H(+). With respect to regulation, GTPase activity is repressed by PDV2 thus increasing stability at the plastid outer envelope membranes (OEMs) periphery. Functionally, mechanochemical GTPase component of both plastid and peroxisome division machinery. Required for the last steps of plastid division specifically in mesophyll-cell, when the narrow isthmus breaks, facilitating the separation of the daughter plastids. Necessary for peroxisome activities. Seems to influence stromule (stroma-filled tubular extensions of the plastid envelope membrane) length and frequency. This chain is Dynamin-like protein ARC5, found in Arabidopsis thaliana (Mouse-ear cress).